The chain runs to 226 residues: Cytidylate kinase (226 aa).

11–19 is a binding site for ATP; that stretch reads GPAGAGKST.

The protein belongs to the cytidylate kinase family. Type 1 subfamily.

The protein localises to the cytoplasm. It carries out the reaction CMP + ATP = CDP + ADP. The catalysed reaction is dCMP + ATP = dCDP + ADP. This Pelotomaculum thermopropionicum (strain DSM 13744 / JCM 10971 / SI) protein is Cytidylate kinase.